Here is a 310-residue protein sequence, read N- to C-terminus: Putative S-adenosyl-L-methionine-dependent methyltransferase MMAR_3534 (310 aa).

Residues Asp131 and 160–161 (DL) each bind S-adenosyl-L-methionine.

It belongs to the UPF0677 family.

In terms of biological role, exhibits S-adenosyl-L-methionine-dependent methyltransferase activity. In Mycobacterium marinum (strain ATCC BAA-535 / M), this protein is Putative S-adenosyl-L-methionine-dependent methyltransferase MMAR_3534.